Here is a 205-residue protein sequence, read N- to C-terminus: Cbp/p300-interacting transactivator 3 (205 aa).

It belongs to the CITED family.

It is found in the nucleus. In terms of biological role, acts as a transcriptional coactivator. Enhances estrogen-dependent transactivation mediated by estrogen receptors. This is Cbp/p300-interacting transactivator 3 (CITED3) from Gallus gallus (Chicken).